The sequence spans 332 residues: MVPTIDMGIPGASSSVAHVPTRRRVLLAEPRGYCAGVDRAVETVERALEKHGPPVYVRHEIVHNRHVVDTLAKAGAVFVEETDQVPEGAIVVFSAHGVAPTVYAAAAERNLQTIDATCPLVTKVHNEARRFARNDYDILLIGHEGHEEVVGTAGEAPEHVQLVDGLDGVERVTIRDEDKVVWLSQTTLSVDETMEIVARLRQRFAKLQDPPSDDICYATQNRQVAVKAMAPECDLVLVVGSRNSSNSVRLVEVALGAGAEAAYLVDWADDIDQSWLQGVTTVGVTSGASVPEVLVRGVLERLAESGYDMVQPVTTANETLVFALPREIRPAR.

Residue Cys-34 participates in [4Fe-4S] cluster binding. The (2E)-4-hydroxy-3-methylbut-2-enyl diphosphate site is built by His-63 and His-96. Residues His-63 and His-96 each contribute to the dimethylallyl diphosphate site. Residues His-63 and His-96 each coordinate isopentenyl diphosphate. Cys-118 is a [4Fe-4S] cluster binding site. Residue His-146 participates in (2E)-4-hydroxy-3-methylbut-2-enyl diphosphate binding. Residue His-146 participates in dimethylallyl diphosphate binding. Residue His-146 coordinates isopentenyl diphosphate. Glu-148 functions as the Proton donor in the catalytic mechanism. Thr-186 provides a ligand contact to (2E)-4-hydroxy-3-methylbut-2-enyl diphosphate. Cys-216 contacts [4Fe-4S] cluster. (2E)-4-hydroxy-3-methylbut-2-enyl diphosphate contacts are provided by Ser-244, Ser-245, Asn-246, and Ser-289. 4 residues coordinate dimethylallyl diphosphate: Ser-244, Ser-245, Asn-246, and Ser-289. Residues Ser-244, Ser-245, Asn-246, and Ser-289 each contribute to the isopentenyl diphosphate site.

The protein belongs to the IspH family. It depends on [4Fe-4S] cluster as a cofactor.

The catalysed reaction is isopentenyl diphosphate + 2 oxidized [2Fe-2S]-[ferredoxin] + H2O = (2E)-4-hydroxy-3-methylbut-2-enyl diphosphate + 2 reduced [2Fe-2S]-[ferredoxin] + 2 H(+). It catalyses the reaction dimethylallyl diphosphate + 2 oxidized [2Fe-2S]-[ferredoxin] + H2O = (2E)-4-hydroxy-3-methylbut-2-enyl diphosphate + 2 reduced [2Fe-2S]-[ferredoxin] + 2 H(+). It participates in isoprenoid biosynthesis; dimethylallyl diphosphate biosynthesis; dimethylallyl diphosphate from (2E)-4-hydroxy-3-methylbutenyl diphosphate: step 1/1. It functions in the pathway isoprenoid biosynthesis; isopentenyl diphosphate biosynthesis via DXP pathway; isopentenyl diphosphate from 1-deoxy-D-xylulose 5-phosphate: step 6/6. Functionally, catalyzes the conversion of 1-hydroxy-2-methyl-2-(E)-butenyl 4-diphosphate (HMBPP) into a mixture of isopentenyl diphosphate (IPP) and dimethylallyl diphosphate (DMAPP). Acts in the terminal step of the DOXP/MEP pathway for isoprenoid precursor biosynthesis. In Mycobacterium ulcerans (strain Agy99), this protein is 4-hydroxy-3-methylbut-2-enyl diphosphate reductase.